The primary structure comprises 88 residues: Small ribosomal subunit protein bS20 (88 aa).

This sequence belongs to the bacterial ribosomal protein bS20 family.

Functionally, binds directly to 16S ribosomal RNA. The protein is Small ribosomal subunit protein bS20 of Clostridioides difficile (strain 630) (Peptoclostridium difficile).